We begin with the raw amino-acid sequence, 157 residues long: Urease accessory protein UreE (157 aa).

Belongs to the UreE family.

It localises to the cytoplasm. Functionally, involved in urease metallocenter assembly. Binds nickel. Probably functions as a nickel donor during metallocenter assembly. The chain is Urease accessory protein UreE from Corynebacterium glutamicum (strain ATCC 13032 / DSM 20300 / JCM 1318 / BCRC 11384 / CCUG 27702 / LMG 3730 / NBRC 12168 / NCIMB 10025 / NRRL B-2784 / 534).